The sequence spans 123 residues: Small ribosomal subunit protein uS12 (123 aa).

Position 89 is a 3-methylthioaspartic acid (aspartate 89). The tract at residues 104-123 (SVGVKDRKKSRSKYGAKRPK) is disordered. Over residues 109–123 (DRKKSRSKYGAKRPK) the composition is skewed to basic residues.

Belongs to the universal ribosomal protein uS12 family. Part of the 30S ribosomal subunit. Contacts proteins S8 and S17. May interact with IF1 in the 30S initiation complex.

Functionally, with S4 and S5 plays an important role in translational accuracy. Interacts with and stabilizes bases of the 16S rRNA that are involved in tRNA selection in the A site and with the mRNA backbone. Located at the interface of the 30S and 50S subunits, it traverses the body of the 30S subunit contacting proteins on the other side and probably holding the rRNA structure together. The combined cluster of proteins S8, S12 and S17 appears to hold together the shoulder and platform of the 30S subunit. In Geotalea daltonii (strain DSM 22248 / JCM 15807 / FRC-32) (Geobacter daltonii), this protein is Small ribosomal subunit protein uS12.